A 421-amino-acid polypeptide reads, in one-letter code: Serine hydroxymethyltransferase (421 aa).

(6S)-5,6,7,8-tetrahydrofolate-binding positions include Leu121 and 125–127; that span reads GHL. N6-(pyridoxal phosphate)lysine is present on Lys229.

Belongs to the SHMT family. In terms of assembly, homodimer. Pyridoxal 5'-phosphate is required as a cofactor.

The protein localises to the cytoplasm. It catalyses the reaction (6R)-5,10-methylene-5,6,7,8-tetrahydrofolate + glycine + H2O = (6S)-5,6,7,8-tetrahydrofolate + L-serine. It participates in one-carbon metabolism; tetrahydrofolate interconversion. The protein operates within amino-acid biosynthesis; glycine biosynthesis; glycine from L-serine: step 1/1. Functionally, catalyzes the reversible interconversion of serine and glycine with tetrahydrofolate (THF) serving as the one-carbon carrier. This reaction serves as the major source of one-carbon groups required for the biosynthesis of purines, thymidylate, methionine, and other important biomolecules. Also exhibits THF-independent aldolase activity toward beta-hydroxyamino acids, producing glycine and aldehydes, via a retro-aldol mechanism. In Haemophilus influenzae (strain PittGG), this protein is Serine hydroxymethyltransferase.